A 459-amino-acid polypeptide reads, in one-letter code: Ribosomal protein uS12 methylthiotransferase RimO (459 aa).

Positions 11–126 (PKVGMVSLGC…VMQAVHSHLP (116 aa)) constitute an MTTase N-terminal domain. [4Fe-4S] cluster-binding residues include Cys20, Cys56, Cys85, Cys157, Cys161, and Cys164. Positions 143–388 (LTPRHYAYLK…MEVAEEVSAA (246 aa)) constitute a Radical SAM core domain. Positions 391 to 459 (ARKVGKTLKV…ADGHDLWGEV (69 aa)) constitute a TRAM domain.

This sequence belongs to the methylthiotransferase family. RimO subfamily. [4Fe-4S] cluster is required as a cofactor.

It localises to the cytoplasm. It carries out the reaction L-aspartate(89)-[ribosomal protein uS12]-hydrogen + (sulfur carrier)-SH + AH2 + 2 S-adenosyl-L-methionine = 3-methylsulfanyl-L-aspartate(89)-[ribosomal protein uS12]-hydrogen + (sulfur carrier)-H + 5'-deoxyadenosine + L-methionine + A + S-adenosyl-L-homocysteine + 2 H(+). In terms of biological role, catalyzes the methylthiolation of an aspartic acid residue of ribosomal protein uS12. This chain is Ribosomal protein uS12 methylthiotransferase RimO, found in Burkholderia pseudomallei (strain K96243).